Reading from the N-terminus, the 354-residue chain is Variable large protein 15/16 (354 aa).

The first 18 residues, 1–18 (MRKRISAIIMTLFMVLVS), serve as a signal peptide directing secretion. Cys19 is lipidated: N-palmitoyl cysteine. Cys19 carries the S-diacylglycerol cysteine lipid modification. Residues 333–354 (EDKSVEATNTAEATTSGQQAKN) are disordered. The segment covering 338-354 (EATNTAEATTSGQQAKN) has biased composition (polar residues).

This sequence belongs to the variable large protein (Vlp) family. Delta subfamily.

The protein localises to the cell outer membrane. Its function is as follows. The Vlp and Vsp proteins are antigenically distinct proteins, only one vlp or vsp gene is transcriptionally active at any one time. Switching between these genes is a mechanism of host immune response evasion. The sequence is that of Variable large protein 15/16 from Borrelia hermsii.